The following is a 188-amino-acid chain: MTILQSILFVTGNKHKLADVKNILGDRFEIKNHDYDLPEIQGSVKEVVLEKCKAAAEIVKGPVLVEDTWLGYKAMNGLPGPYVKWFLNSVGPDGLYRMVSAFDTKEAQAGCTFGYTKGPGKPIHLFEGILDGQVVPPRGSNGFGWNSIFQPNGHKHTYAEMTDEERNSCSHRYLAAMKLRDFLESEKN.

T11–K16 is an ITP binding site. Residue E39 coordinates Mg(2+). ITP-binding positions include K51, D67–T68, K84, F143–N146, and H171–R172.

It belongs to the HAM1 NTPase family. Homodimer. Requires Mg(2+) as cofactor. Mn(2+) serves as cofactor.

The protein resides in the cytoplasm. It localises to the nucleus. The catalysed reaction is ITP + H2O = IMP + diphosphate + H(+). It carries out the reaction dITP + H2O = dIMP + diphosphate + H(+). The enzyme catalyses XTP + H2O = XMP + diphosphate + H(+). In terms of biological role, pyrophosphatase that hydrolyzes non-canonical purine nucleotides such as inosine triphosphate (ITP), deoxyinosine triphosphate (dITP) or xanthosine 5'-triphosphate (XTP) to their respective monophosphate derivatives. The enzyme does not distinguish between the deoxy- and ribose forms. Probably excludes non-canonical purines from RNA and DNA precursor pools, thus preventing their incorporation into RNA and DNA and avoiding chromosomal lesions. This Schizosaccharomyces pombe (strain 972 / ATCC 24843) (Fission yeast) protein is Inosine triphosphate pyrophosphatase.